The chain runs to 324 residues: Cysteine-rich repeat secretory protein 9 (324 aa).

The signal sequence occupies residues 1 to 27 (MARIIITLTIPLFYFFFFSLLSHQTMS). 2 Gnk2-homologous domains span residues 29 to 132 (PDHI…NVSF) and 138 to 248 (IVPS…TSVL). The segment at 251–286 (PPPSPSAPPPRSPPPKSSPPSSLPQTPSPPLVFTPP) is disordered.

The protein belongs to the cysteine-rich repeat secretory protein family.

Its subcellular location is the secreted. The sequence is that of Cysteine-rich repeat secretory protein 9 (CRRSP9) from Arabidopsis thaliana (Mouse-ear cress).